A 260-amino-acid chain; its full sequence is Chlorocatechol 1,2-dioxygenase (260 aa).

Positions 130, 164, 188, and 190 each coordinate Fe cation.

Belongs to the intradiol ring-cleavage dioxygenase family. The cofactor is Fe(3+).

It carries out the reaction 3-chlorocatechol + O2 = (2E,4Z)-2-chloromuconate + 2 H(+). The catalysed reaction is 3,5-dichlorocatechol + O2 = (2E,4E)-2,4-dichloromuconate + 2 H(+). Its pathway is aromatic compound metabolism; 3-chlorocatechol degradation. In terms of biological role, preferentially converts 3-chlorocatechol and 3,5-dichlorocatechol as opposed to other chlorinated catechols. Retains diminished activity toward non-chlorinated substrates. The chain is Chlorocatechol 1,2-dioxygenase (clcA) from Pseudomonas putida (Arthrobacter siderocapsulatus).